The chain runs to 369 residues: Chaperone protein DnaJ (369 aa).

Positions Asp7–Gly73 constitute a J domain. A CR-type zinc finger spans residues Gly143 to Lys225. Zn(2+) is bound by residues Cys156, Cys159, Cys173, Cys176, Cys199, Cys202, Cys213, and Cys216. 4 CXXCXGXG motif repeats span residues Cys156–Gly163, Cys173–Gly180, Cys199–Gly206, and Cys213–Gly220.

Belongs to the DnaJ family. Homodimer. Requires Zn(2+) as cofactor.

The protein localises to the cytoplasm. In terms of biological role, participates actively in the response to hyperosmotic and heat shock by preventing the aggregation of stress-denatured proteins and by disaggregating proteins, also in an autonomous, DnaK-independent fashion. Unfolded proteins bind initially to DnaJ; upon interaction with the DnaJ-bound protein, DnaK hydrolyzes its bound ATP, resulting in the formation of a stable complex. GrpE releases ADP from DnaK; ATP binding to DnaK triggers the release of the substrate protein, thus completing the reaction cycle. Several rounds of ATP-dependent interactions between DnaJ, DnaK and GrpE are required for fully efficient folding. Also involved, together with DnaK and GrpE, in the DNA replication of plasmids through activation of initiation proteins. This chain is Chaperone protein DnaJ, found in Thermotoga petrophila (strain ATCC BAA-488 / DSM 13995 / JCM 10881 / RKU-1).